A 135-amino-acid chain; its full sequence is uncharacterized protein (135 aa).

This is an uncharacterized protein from Rickettsia prowazekii (strain Madrid E).